The chain runs to 162 residues: UPF0114 protein PST_0950 (162 aa).

3 helical membrane passes run 15–35 (LLAP…IKFF), 53–73 (LVLT…LVMV), and 136–156 (LMWY…MGYM).

This sequence belongs to the UPF0114 family.

Its subcellular location is the cell membrane. This Stutzerimonas stutzeri (strain A1501) (Pseudomonas stutzeri) protein is UPF0114 protein PST_0950.